Consider the following 617-residue polypeptide: Proline--tRNA ligase (617 aa).

The protein belongs to the class-II aminoacyl-tRNA synthetase family. ProS type 1 subfamily. As to quaternary structure, homodimer.

It localises to the cytoplasm. The enzyme catalyses tRNA(Pro) + L-proline + ATP = L-prolyl-tRNA(Pro) + AMP + diphosphate. Its function is as follows. Catalyzes the attachment of proline to tRNA(Pro) in a two-step reaction: proline is first activated by ATP to form Pro-AMP and then transferred to the acceptor end of tRNA(Pro). As ProRS can inadvertently accommodate and process non-cognate amino acids such as alanine and cysteine, to avoid such errors it has two additional distinct editing activities against alanine. One activity is designated as 'pretransfer' editing and involves the tRNA(Pro)-independent hydrolysis of activated Ala-AMP. The other activity is designated 'posttransfer' editing and involves deacylation of mischarged Ala-tRNA(Pro). The misacylated Cys-tRNA(Pro) is not edited by ProRS. This chain is Proline--tRNA ligase, found in Streptococcus pneumoniae serotype 4 (strain ATCC BAA-334 / TIGR4).